The chain runs to 221 residues: 2-C-methyl-D-erythritol 4-phosphate cytidylyltransferase (221 aa).

Belongs to the IspD/TarI cytidylyltransferase family. IspD subfamily.

It carries out the reaction 2-C-methyl-D-erythritol 4-phosphate + CTP + H(+) = 4-CDP-2-C-methyl-D-erythritol + diphosphate. The protein operates within isoprenoid biosynthesis; isopentenyl diphosphate biosynthesis via DXP pathway; isopentenyl diphosphate from 1-deoxy-D-xylulose 5-phosphate: step 2/6. Catalyzes the formation of 4-diphosphocytidyl-2-C-methyl-D-erythritol from CTP and 2-C-methyl-D-erythritol 4-phosphate (MEP). The chain is 2-C-methyl-D-erythritol 4-phosphate cytidylyltransferase from Roseobacter denitrificans (strain ATCC 33942 / OCh 114) (Erythrobacter sp. (strain OCh 114)).